Here is a 129-residue protein sequence, read N- to C-terminus: Small ribosomal subunit protein uS8 (129 aa).

It belongs to the universal ribosomal protein uS8 family. Part of the 30S ribosomal subunit. Contacts proteins S5 and S12.

In terms of biological role, one of the primary rRNA binding proteins, it binds directly to 16S rRNA central domain where it helps coordinate assembly of the platform of the 30S subunit. The polypeptide is Small ribosomal subunit protein uS8 (Dichelobacter nodosus (strain VCS1703A)).